Reading from the N-terminus, the 179-residue chain is Large ribosomal subunit protein uL5 (179 aa).

The protein belongs to the universal ribosomal protein uL5 family. In terms of assembly, part of the 50S ribosomal subunit; part of the 5S rRNA/L5/L18/L25 subcomplex. Contacts the 5S rRNA and the P site tRNA. Forms a bridge to the 30S subunit in the 70S ribosome.

This is one of the proteins that bind and probably mediate the attachment of the 5S RNA into the large ribosomal subunit, where it forms part of the central protuberance. In the 70S ribosome it contacts protein S13 of the 30S subunit (bridge B1b), connecting the 2 subunits; this bridge is implicated in subunit movement. Contacts the P site tRNA; the 5S rRNA and some of its associated proteins might help stabilize positioning of ribosome-bound tRNAs. The sequence is that of Large ribosomal subunit protein uL5 from Dictyoglomus turgidum (strain DSM 6724 / Z-1310).